The primary structure comprises 405 residues: Formin-like protein 15a (405 aa).

Residues 1-31 (MSLVEISGSDAMAAPMPGRVPPPPPRPPPMP) form a disordered region. Over residues 18–31 (GRVPPPPPRPPPMP) the composition is skewed to pro residues. An FH2 domain is found at 52 to 405 (FPRPAKKRAS…VCWFFVRLMI (354 aa)).

Belongs to the formin-like family. Class-II subfamily.

This chain is Formin-like protein 15a (FH15A), found in Arabidopsis thaliana (Mouse-ear cress).